The following is a 173-amino-acid chain: NADH-ubiquinone oxidoreductase chain 6 (173 aa).

Helical transmembrane passes span 1–21, 27–47, 48–68, 87–107, and 139–159; these read MTYFVIFLGICFMLGVLAVAS, YGVVGLVVASVMGCGWLVSLG, VSFVSLALFLVYLGGMLVVFV, VVGYGLGFVLVVWMGVVLGGL, and CGVGLFLVAGWGLLLALFVVL.

Belongs to the complex I subunit 6 family. Core subunit of respiratory chain NADH dehydrogenase (Complex I) which is composed of 45 different subunits.

It localises to the mitochondrion inner membrane. The enzyme catalyses a ubiquinone + NADH + 5 H(+)(in) = a ubiquinol + NAD(+) + 4 H(+)(out). Functionally, core subunit of the mitochondrial membrane respiratory chain NADH dehydrogenase (Complex I) which catalyzes electron transfer from NADH through the respiratory chain, using ubiquinone as an electron acceptor. Essential for the catalytic activity and assembly of complex I. This is NADH-ubiquinone oxidoreductase chain 6 (MT-ND6) from Gallus gallus (Chicken).